The primary structure comprises 166 residues: 6,7-dimethyl-8-ribityllumazine synthase (166 aa).

Residues tryptophan 31, 63 to 65 (SFE), and 85 to 87 (VII) each bind 5-amino-6-(D-ribitylamino)uracil. Position 90–91 (90–91 (GT)) interacts with (2S)-2-hydroxy-3-oxobutyl phosphate. The Proton donor role is filled by histidine 93. Phenylalanine 118 contributes to the 5-amino-6-(D-ribitylamino)uracil binding site. Arginine 132 provides a ligand contact to (2S)-2-hydroxy-3-oxobutyl phosphate.

The protein belongs to the DMRL synthase family.

The catalysed reaction is (2S)-2-hydroxy-3-oxobutyl phosphate + 5-amino-6-(D-ribitylamino)uracil = 6,7-dimethyl-8-(1-D-ribityl)lumazine + phosphate + 2 H2O + H(+). Its pathway is cofactor biosynthesis; riboflavin biosynthesis; riboflavin from 2-hydroxy-3-oxobutyl phosphate and 5-amino-6-(D-ribitylamino)uracil: step 1/2. In terms of biological role, catalyzes the formation of 6,7-dimethyl-8-ribityllumazine by condensation of 5-amino-6-(D-ribitylamino)uracil with 3,4-dihydroxy-2-butanone 4-phosphate. This is the penultimate step in the biosynthesis of riboflavin. The protein is 6,7-dimethyl-8-ribityllumazine synthase of Cutibacterium acnes (strain DSM 16379 / KPA171202) (Propionibacterium acnes).